Here is a 656-residue protein sequence, read N- to C-terminus: UvrABC system protein B (656 aa).

A Helicase ATP-binding domain is found at 23 to 180; the sequence is EGIKKGYRFQ…QHLAKIGYER (158 aa). Position 36–43 (36–43) interacts with ATP; the sequence is GVTGSGKT. Positions 89–112 match the Beta-hairpin motif; that stretch reads YYDYYQPEAYVPTKDLYIEKNADI. Residues 426 to 588 form the Helicase C-terminal domain; sequence QVDDLISEIK…ITPKTIVKPL (163 aa). A UVR domain is found at 614–649; that stretch reads EEYLSLLEEEMYRAASELRYEDAAKLRDEIFRLREE.

The protein belongs to the UvrB family. As to quaternary structure, forms a heterotetramer with UvrA during the search for lesions. Interacts with UvrC in an incision complex.

The protein resides in the cytoplasm. Functionally, the UvrABC repair system catalyzes the recognition and processing of DNA lesions. A damage recognition complex composed of 2 UvrA and 2 UvrB subunits scans DNA for abnormalities. Upon binding of the UvrA(2)B(2) complex to a putative damaged site, the DNA wraps around one UvrB monomer. DNA wrap is dependent on ATP binding by UvrB and probably causes local melting of the DNA helix, facilitating insertion of UvrB beta-hairpin between the DNA strands. Then UvrB probes one DNA strand for the presence of a lesion. If a lesion is found the UvrA subunits dissociate and the UvrB-DNA preincision complex is formed. This complex is subsequently bound by UvrC and the second UvrB is released. If no lesion is found, the DNA wraps around the other UvrB subunit that will check the other stand for damage. This is UvrABC system protein B from Pseudothermotoga lettingae (strain ATCC BAA-301 / DSM 14385 / NBRC 107922 / TMO) (Thermotoga lettingae).